The following is a 208-amino-acid chain: Imidazole glycerol phosphate synthase subunit HisH (208 aa).

Residues 1-206 (MIVIIDYDTG…KEVTYSCKSS (206 aa)) form the Glutamine amidotransferase type-1 domain. Cys79 serves as the catalytic Nucleophile. Residues His181 and Glu183 contribute to the active site.

As to quaternary structure, heterodimer of HisH and HisF.

The protein resides in the cytoplasm. It catalyses the reaction 5-[(5-phospho-1-deoxy-D-ribulos-1-ylimino)methylamino]-1-(5-phospho-beta-D-ribosyl)imidazole-4-carboxamide + L-glutamine = D-erythro-1-(imidazol-4-yl)glycerol 3-phosphate + 5-amino-1-(5-phospho-beta-D-ribosyl)imidazole-4-carboxamide + L-glutamate + H(+). It carries out the reaction L-glutamine + H2O = L-glutamate + NH4(+). The protein operates within amino-acid biosynthesis; L-histidine biosynthesis; L-histidine from 5-phospho-alpha-D-ribose 1-diphosphate: step 5/9. Its function is as follows. IGPS catalyzes the conversion of PRFAR and glutamine to IGP, AICAR and glutamate. The HisH subunit catalyzes the hydrolysis of glutamine to glutamate and ammonia as part of the synthesis of IGP and AICAR. The resulting ammonia molecule is channeled to the active site of HisF. In Listeria monocytogenes serovar 1/2a (strain ATCC BAA-679 / EGD-e), this protein is Imidazole glycerol phosphate synthase subunit HisH.